We begin with the raw amino-acid sequence, 388 residues long: tRNA (guanine(26)-N(2))-dimethyltransferase (388 aa).

The region spanning 7 to 381 is the Trm1 methyltransferase domain; the sequence is KTVEEGLTKI…APLKKIKEII (375 aa). Residues Arg-40, Arg-70, Asp-88, Asp-115, and Ala-116 each coordinate S-adenosyl-L-methionine. Zn(2+)-binding residues include Cys-248, Cys-251, Cys-268, and Cys-271.

Belongs to the class I-like SAM-binding methyltransferase superfamily. Trm1 family.

It catalyses the reaction guanosine(26) in tRNA + 2 S-adenosyl-L-methionine = N(2)-dimethylguanosine(26) in tRNA + 2 S-adenosyl-L-homocysteine + 2 H(+). Functionally, dimethylates a single guanine residue at position 26 of a number of tRNAs using S-adenosyl-L-methionine as donor of the methyl groups. The sequence is that of tRNA (guanine(26)-N(2))-dimethyltransferase from Methanobrevibacter smithii (strain ATCC 35061 / DSM 861 / OCM 144 / PS).